Here is a 521-residue protein sequence, read N- to C-terminus: Probable feruloyl esterase B-2 (521 aa).

The first 19 residues, 1–19 (MKVSLWLTLLGVNLSLALA), serve as a signal peptide directing secretion. N-linked (GlcNAc...) asparagine glycans are attached at residues N13, N53, N85, N98, and N138. 2 disulfides stabilise this stretch: C28-C75 and C63-C114. Cystine bridges form between C187–C440, C257–C274, C283–C291, and C506–C520. S188 serves as the catalytic Acyl-ester intermediate. N-linked (GlcNAc...) asparagine glycosylation occurs at N235. Positions 258, 261, 263, 265, and 267 each coordinate Ca(2+). D399 acts as the Charge relay system in catalysis. N419 carries N-linked (GlcNAc...) asparagine glycosylation. H439 serves as the catalytic Charge relay system.

This sequence belongs to the tannase family.

The protein resides in the secreted. The enzyme catalyses feruloyl-polysaccharide + H2O = ferulate + polysaccharide.. Functionally, involved in degradation of plant cell walls. Hydrolyzes the feruloyl-arabinose ester bond in arabinoxylans as well as the feruloyl-galactose and feruloyl-arabinose ester bonds in pectin. This Aspergillus flavus (strain ATCC 200026 / FGSC A1120 / IAM 13836 / NRRL 3357 / JCM 12722 / SRRC 167) protein is Probable feruloyl esterase B-2 (faeB-2).